A 240-amino-acid chain; its full sequence is Sugar fermentation stimulation protein homolog (240 aa).

This sequence belongs to the SfsA family.

The protein is Sugar fermentation stimulation protein homolog of Saccharolobus islandicus (strain L.S.2.15 / Lassen #1) (Sulfolobus islandicus).